We begin with the raw amino-acid sequence, 543 residues long: CTP synthase (543 aa).

Residues 1-265 are amidoligase domain; it reads MARYIFITGG…DDEVLAAFGI (265 aa). A CTP-binding site is contributed by Ser-13. Position 13 (Ser-13) interacts with UTP. 14–19 is a binding site for ATP; sequence SLGKGL. Tyr-54 contacts L-glutamine. Residue Asp-71 participates in ATP binding. The Mg(2+) site is built by Asp-71 and Glu-139. CTP-binding positions include 146–148, 186–191, and Lys-222; these read DIE and KTKPTQ. UTP contacts are provided by residues 186-191 and Lys-222; that span reads KTKPTQ. Position 238-240 (238-240) interacts with ATP; the sequence is RDV. The region spanning 291 to 542 is the Glutamine amidotransferase type-1 domain; sequence TIAIVGKYTG…IQAAVVQSRL (252 aa). Gly-353 lines the L-glutamine pocket. Cys-380 acts as the Nucleophile; for glutamine hydrolysis in catalysis. Residues 381–384, Glu-404, and Arg-470 each bind L-glutamine; that span reads FGMQ. Catalysis depends on residues His-515 and Glu-517.

The protein belongs to the CTP synthase family. Homotetramer.

It catalyses the reaction UTP + L-glutamine + ATP + H2O = CTP + L-glutamate + ADP + phosphate + 2 H(+). The catalysed reaction is L-glutamine + H2O = L-glutamate + NH4(+). It carries out the reaction UTP + NH4(+) + ATP = CTP + ADP + phosphate + 2 H(+). The protein operates within pyrimidine metabolism; CTP biosynthesis via de novo pathway; CTP from UDP: step 2/2. Allosterically activated by GTP, when glutamine is the substrate; GTP has no effect on the reaction when ammonia is the substrate. The allosteric effector GTP functions by stabilizing the protein conformation that binds the tetrahedral intermediate(s) formed during glutamine hydrolysis. Inhibited by the product CTP, via allosteric rather than competitive inhibition. Catalyzes the ATP-dependent amination of UTP to CTP with either L-glutamine or ammonia as the source of nitrogen. Regulates intracellular CTP levels through interactions with the four ribonucleotide triphosphates. In Bradyrhizobium sp. (strain BTAi1 / ATCC BAA-1182), this protein is CTP synthase.